We begin with the raw amino-acid sequence, 206 residues long: Cytochrome b6-f complex iron-sulfur subunit, chloroplastic (206 aa).

Residues 1–29 (MAMLSSRRVAAPAKASAIRRSRVMPVVRA) constitute a chloroplast transit peptide. A helical membrane pass occupies residues 39–68 (MNKRNIMNLILAGGAGLPITTLALGYGAFF). The Rieske domain occupies 92–188 (AGEWLKTHLA…CDVAESGLVT (97 aa)). C134, H136, C152, and H155 together coordinate [2Fe-2S] cluster. C139 and C154 are joined by a disulfide.

Belongs to the Rieske iron-sulfur protein family. The 4 large subunits of the cytochrome b6-f complex are cytochrome b6, subunit IV (17 kDa polypeptide, petD), cytochrome f and the Rieske protein, while the 4 small subunits are petG, petL, petM and petN. The complex functions as a dimer. Requires [2Fe-2S] cluster as cofactor.

The protein localises to the plastid. The protein resides in the chloroplast thylakoid membrane. The catalysed reaction is 2 oxidized [plastocyanin] + a plastoquinol + 2 H(+)(in) = 2 reduced [plastocyanin] + a plastoquinone + 4 H(+)(out). Component of the cytochrome b6-f complex, which mediates electron transfer between photosystem II (PSII) and photosystem I (PSI), cyclic electron flow around PSI, and state transitions. This is Cytochrome b6-f complex iron-sulfur subunit, chloroplastic (petC) from Chlamydomonas reinhardtii (Chlamydomonas smithii).